Here is a 554-residue protein sequence, read N- to C-terminus: Undecaprenyl phosphate-alpha-4-amino-4-deoxy-L-arabinose arabinosyl transferase (554 aa).

11 helical membrane passes run 4-24 (LKDSGAALLALFFVLVYLLPV), 87-107 (FGSIFSTALSAVLVYWLATLL), 115-135 (VLATLIYLSFLLVFGIGTYAV), 178-198 (FMTKGFLALAVPVIAVLPIVI), 206-226 (LVVFGPIAIVCAVLLSLPWAL), 262-282 (YLPILCIGVLPWLGLLPGALF), 293-313 (ELFFLLSWVVMPLLFFSVAKG), 315-335 (LPTYILPCMAPLSLLMAAYAT), 351-371 (VINLLFGVACALVIVVIGLGL), 384-404 (QKVWLGVLAFAGWGVTGFITL), and 414-434 (AAACPLLFILLVGYLIPQQVV).

It belongs to the glycosyltransferase 83 family.

The protein resides in the cell inner membrane. It catalyses the reaction 4-amino-4-deoxy-alpha-L-arabinopyranosyl di-trans,octa-cis-undecaprenyl phosphate + lipid IVA = lipid IIA + di-trans,octa-cis-undecaprenyl phosphate.. Its pathway is lipopolysaccharide metabolism; 4-amino-4-deoxy-beta-L-arabinose-lipid A biosynthesis. In terms of biological role, catalyzes the transfer of the L-Ara4N moiety of the glycolipid undecaprenyl phosphate-alpha-L-Ara4N to lipid A. The modified arabinose is attached to lipid A and is required for resistance to polymyxin and cationic antimicrobial peptides. This chain is Undecaprenyl phosphate-alpha-4-amino-4-deoxy-L-arabinose arabinosyl transferase, found in Yersinia pseudotuberculosis serotype O:3 (strain YPIII).